The following is a 442-amino-acid chain: Proline--tRNA ligase (442 aa).

Belongs to the class-II aminoacyl-tRNA synthetase family. ProS type 2 subfamily. In terms of assembly, homodimer.

It localises to the cytoplasm. It carries out the reaction tRNA(Pro) + L-proline + ATP = L-prolyl-tRNA(Pro) + AMP + diphosphate. Its function is as follows. Catalyzes the attachment of proline to tRNA(Pro) in a two-step reaction: proline is first activated by ATP to form Pro-AMP and then transferred to the acceptor end of tRNA(Pro). In Brucella suis (strain ATCC 23445 / NCTC 10510), this protein is Proline--tRNA ligase.